Consider the following 590-residue polypeptide: L-gulonolactone oxidase 5 (590 aa).

The first 31 residues, 1 to 31, serve as a signal peptide directing secretion; it reads MAFGYSPSYCSFWRTLLGLYCLFTLVHTVIS. Residues 60–242 enclose the FAD-binding PCMH-type domain; that stretch reads STCRAANVAY…SQVTFELQPM (183 aa).

It belongs to the oxygen-dependent FAD-linked oxidoreductase family. FAD serves as cofactor.

It carries out the reaction L-gulono-1,4-lactone + O2 = L-ascorbate + H2O2 + H(+). It functions in the pathway cofactor biosynthesis; L-ascorbate biosynthesis. In terms of biological role, catalyzes the oxidation of L-gulono-1,4-lactone to ascorbic acid. L-gulono-1,4-lactone is oxidized to hydrogen peroxide and L-xylo-hexulonolactone which spontaneously isomerizes to L-ascorbate. This chain is L-gulonolactone oxidase 5, found in Arabidopsis thaliana (Mouse-ear cress).